Here is a 518-residue protein sequence, read N- to C-terminus: Chromosomal replication initiator protein DnaA (518 aa).

Positions 1 to 72 are domain I, interacts with DnaA modulators; that stretch reads MTLAEFWPLC…VREELAAGRS (72 aa). The segment at 72-180 is domain II; it reads SAFVFKPGEG…DAEEARYEQT (109 aa). A domain III, AAA+ region region spans residues 181-397; sequence NLSPDYTFDT…GAFNRVGASS (217 aa). The ATP site is built by glycine 225, glycine 227, lysine 228, and threonine 229. The interval 398–518 is domain IV, binds dsDNA; it reads RFMNRPVIDI…YEKLLILIQN (121 aa).

This sequence belongs to the DnaA family. As to quaternary structure, oligomerizes as a right-handed, spiral filament on DNA at oriC.

The protein localises to the cytoplasm. Its function is as follows. Plays an essential role in the initiation and regulation of chromosomal replication. ATP-DnaA binds to the origin of replication (oriC) to initiate formation of the DNA replication initiation complex once per cell cycle. Binds the DnaA box (a 9 base pair repeat at the origin) and separates the double-stranded (ds)DNA. Forms a right-handed helical filament on oriC DNA; dsDNA binds to the exterior of the filament while single-stranded (ss)DNA is stabiized in the filament's interior. The ATP-DnaA-oriC complex binds and stabilizes one strand of the AT-rich DNA unwinding element (DUE), permitting loading of DNA polymerase. After initiation quickly degrades to an ADP-DnaA complex that is not apt for DNA replication. Binds acidic phospholipids. This is Chromosomal replication initiator protein DnaA from Neisseria meningitidis serogroup C / serotype 2a (strain ATCC 700532 / DSM 15464 / FAM18).